A 505-amino-acid polypeptide reads, in one-letter code: MSAEEMVQIRLEDRCYPVSKRKLIEQSDYFRALYRSGMREALSQEAGGPEVQQLRGLSAPGLRLVLDFINAGGAREGWLLGPRGEKGGGVDEDEEMDEVSLLSELVEAASFLQVTSLLQLLLSQVRLNNCLEMYRLAQVYGLPDLQEACLRFMVVHFHEVLCKPQFHLLGSPPQAPGDVSLKQRLREARMTGTPVLVALGDFLGGPLAPHPYQGEPPSMLRYEEMTERWFPLANNLPPDLVNVRGYGSAILDNYLFIVGGYRITSQEISAAHSYNPSTNEWLQVASMNQKRSNFKLVAVNSKLYAIGGQAVSNVECYNPEQDAWNFVAPLPNPLAEFSACECKGKIYVIGGYTTRDRNMNILQYCPSSDMWTLFETCDVHIRKQQMVSVEETIYIVGGCLHELGPNRRSSQSEDMLTVQSYNTVTRQWLYLKENTSKSGLNLTCALHNDGIYIMSRDVTLSTSLEHRVFLKYNIFSDSWEAFRRFPAFGHNLLVSSLYLPNKAET.

Residues 5-78 (EMVQIRLEDR…INAGGAREGW (74 aa)) form the BTB domain. A Phosphoserine modification is found at Ser43. 6 Kelch repeats span residues 176-234 (PGDV…PLAN), 235-282 (NLPP…NEWL), 284-325 (VASM…DAWN), 327-372 (VAPL…DMWT), 374-429 (FETC…RQWL), and 431-480 (LKEN…DSWE).

Component of the BCR(KLHL42) E3 ubiquitin ligase complex, at least composed of CUL3 and KLHL42. Interacts (via the BTB domain) with CUL3. Interacts (via the kelch domains) with KATNA1.

Its subcellular location is the cytoplasm. It is found in the cytoskeleton. It localises to the spindle. It participates in protein modification; protein ubiquitination. Functionally, substrate-specific adapter of a BCR (BTB-CUL3-RBX1) E3 ubiquitin-protein ligase complex required for mitotic progression and cytokinesis. The BCR(KLHL42) E3 ubiquitin ligase complex mediates the ubiquitination and subsequent degradation of KATNA1. Involved in microtubule dynamics throughout mitosis. The protein is Kelch-like protein 42 (KLHL42) of Homo sapiens (Human).